A 599-amino-acid polypeptide reads, in one-letter code: Probable acetolactate synthase large subunit (599 aa).

Residue glutamate 47 participates in thiamine diphosphate binding. FAD contacts are provided by residues arginine 149, 258 to 279 (HGTK…IGCR), and 301 to 320 (DIDP…IVGD). A thiamine pyrophosphate binding region spans residues 404–484 (QNQMWMAHYF…VVICIFDNRT (81 aa)). 2 residues coordinate Mg(2+): aspartate 455 and asparagine 482.

Belongs to the TPP enzyme family. As to quaternary structure, dimer of large and small chains. Mg(2+) is required as a cofactor. Requires thiamine diphosphate as cofactor.

It catalyses the reaction 2 pyruvate + H(+) = (2S)-2-acetolactate + CO2. Its pathway is amino-acid biosynthesis; L-isoleucine biosynthesis; L-isoleucine from 2-oxobutanoate: step 1/4. It participates in amino-acid biosynthesis; L-valine biosynthesis; L-valine from pyruvate: step 1/4. The sequence is that of Probable acetolactate synthase large subunit (ilvB) from Methanococcus aeolicus.